Here is a 498-residue protein sequence, read N- to C-terminus: Glycerol kinase (498 aa).

Residue T12 coordinates ADP. ATP contacts are provided by T12, T13, and S14. Sn-glycerol 3-phosphate is bound at residue T12. An ADP-binding site is contributed by R16. Sn-glycerol 3-phosphate is bound by residues R82, E83, Y134, and D243. Glycerol contacts are provided by R82, E83, Y134, D243, and Q244. ADP contacts are provided by T265 and G308. Residues T265, G308, Q312, and G409 each contribute to the ATP site. Residues G409 and N413 each coordinate ADP.

Belongs to the FGGY kinase family. Homotetramer and homodimer (in equilibrium).

The enzyme catalyses glycerol + ATP = sn-glycerol 3-phosphate + ADP + H(+). The protein operates within polyol metabolism; glycerol degradation via glycerol kinase pathway; sn-glycerol 3-phosphate from glycerol: step 1/1. With respect to regulation, activated by phosphorylation and inhibited by fructose 1,6-bisphosphate (FBP). Its function is as follows. Key enzyme in the regulation of glycerol uptake and metabolism. Catalyzes the phosphorylation of glycerol to yield sn-glycerol 3-phosphate. In Clostridium botulinum (strain Loch Maree / Type A3), this protein is Glycerol kinase.